A 1250-amino-acid polypeptide reads, in one-letter code: SRC kinase signaling inhibitor 1 (1250 aa).

The segment covering 19–45 (AEGRARSPREEVGPRDPGGRGEPDPER) has biased composition (basic and acidic residues). The disordered stretch occupies residues 19–78 (AEGRARSPREEVGPRDPGGRGEPDPERSSPPMLSADDAEYPREYRTLGGGGGGGSGGRRF). Residues Ser-47 and Ser-52 each carry the phosphoserine modification. Positions 65–75 (LGGGGGGGSGG) are enriched in gly residues. Ser-79 carries the post-translational modification Phosphoserine. Position 86 is a phosphothreonine (Thr-86). Phosphoserine occurs at positions 87, 98, 211, 233, 237, 247, and 293. Residue Tyr-309 is modified to Phosphotyrosine. The interval 352-448 (ASRESSPTRR…RRDVKPDEDL (97 aa)) is disordered. Polar residues predominate over residues 354-364 (RESSPTRRLNN). The span at 365-374 (LSPASHLASS) shows a compositional bias: low complexity. A phosphoserine mark is found at Ser-366, Ser-375, and Ser-392. Low complexity predominate over residues 381–399 (PSGLPSGLPSGSPSRSRLS). An omega-N-methylarginine mark is found at Arg-397 and Arg-404. Ser-411, Ser-430, and Ser-432 each carry phosphoserine. A compositionally biased stretch (basic and acidic residues) spans 437-448 (LERRDVKPDEDL). The residue at position 464 (Tyr-464) is a Phosphotyrosine. Residues 538-710 (PSSPQKLADV…ASSTPAGQPT (173 aa)) form a disordered region. The segment covering 552–563 (GGPPPPHSPYSG) has biased composition (pro residues). Residues Ser-559, Ser-562, and Ser-566 each carry the phosphoserine modification. Arg-567 bears the Omega-N-methylarginine mark. A phosphoserine mark is found at Ser-569, Ser-579, Ser-581, Ser-583, and Ser-588. Low complexity predominate over residues 590 to 607 (GGKARSTGSASTAGAPPS). The span at 628 to 640 (KDTETRERMEAME) shows a compositional bias: basic and acidic residues. Phosphoserine occurs at positions 664 and 688. Residues Thr-691 and Thr-704 each carry the phosphothreonine modification. Low complexity predominate over residues 701-710 (ASSTPAGQPT). 2 coiled-coil regions span residues 712–753 (VSRL…RALL) and 793–813 (EELI…IQRD). The segment at 714-764 (RLQMQLHLRGLQNSASDLRGQLQQLRNVQLQNQESVRALLKPTEADVSMRV) is interaction with SNAP25. Phosphoserine is present on residues Ser-911 and Ser-933. Disordered stretches follow at residues 924–982 (GLDF…ERDW) and 1016–1094 (DCAS…TGEV). Thr-951 is subject to Phosphothreonine. Ser-1054 is modified (phosphoserine). The span at 1069–1078 (KSPPPPPPRR) shows a compositional bias: pro residues. Phosphoserine occurs at positions 1110 and 1127. Positions 1155-1250 (ELESGGSSVP…FGARNSSISF (96 aa)) are disordered. The span at 1217–1250 (PNETSSPGSEKPSGSRTSIPVLTSFGARNSSISF) shows a compositional bias: polar residues.

This sequence belongs to the SRCIN1 family. In terms of assembly, interacts with the N-terminal coiled-coil region of SNAP25. Interacts with BCAR1/p130Cas and SRC through its C-terminal domain. Interacts with CSK, CTTN, SORBS3/vinexin, SYP and MAPRE3/EB3. Tyrosine-phosphorylated in response to EGF and to cell adhesion to integrin ligands. In terms of tissue distribution, expressed predominantly in central nervous system with high levels detected in cortex, cerebellum, midbrain and spinal cord (at protein level). Also expressed in testis and epithelial-rich tissues such as mammary gland, lung and kidney.

Its subcellular location is the cytoplasm. It is found in the cytoskeleton. It localises to the cell projection. The protein resides in the axon. The protein localises to the dendrite. Its subcellular location is the presynapse. It is found in the postsynapse. It localises to the postsynaptic density. Functionally, acts as a negative regulator of SRC by activating CSK which inhibits SRC activity and downstream signaling, leading to impaired cell spreading and migration. Regulates dendritic spine morphology. Involved in calcium-dependent exocytosis. May play a role in neurotransmitter release or synapse maintenance. This is SRC kinase signaling inhibitor 1 (Srcin1) from Mus musculus (Mouse).